A 388-amino-acid chain; its full sequence is Succinate--CoA ligase [ADP-forming] subunit beta (388 aa).

An ATP-grasp domain is found at 9-244; sequence KQIFAEYQLP…PSQEDPREAL (236 aa). Residues Lys-46, 53–55, Glu-99, Ser-102, and Glu-107 contribute to the ATP site; that span reads GRG. Mg(2+) is bound by residues Asn-199 and Asp-213. Residues Asn-264 and 321–323 each bind substrate; that span reads GIV.

Belongs to the succinate/malate CoA ligase beta subunit family. As to quaternary structure, heterotetramer of two alpha and two beta subunits. Requires Mg(2+) as cofactor.

The enzyme catalyses succinate + ATP + CoA = succinyl-CoA + ADP + phosphate. It catalyses the reaction GTP + succinate + CoA = succinyl-CoA + GDP + phosphate. The protein operates within carbohydrate metabolism; tricarboxylic acid cycle; succinate from succinyl-CoA (ligase route): step 1/1. In terms of biological role, succinyl-CoA synthetase functions in the citric acid cycle (TCA), coupling the hydrolysis of succinyl-CoA to the synthesis of either ATP or GTP and thus represents the only step of substrate-level phosphorylation in the TCA. The beta subunit provides nucleotide specificity of the enzyme and binds the substrate succinate, while the binding sites for coenzyme A and phosphate are found in the alpha subunit. In Pasteurella multocida (strain Pm70), this protein is Succinate--CoA ligase [ADP-forming] subunit beta.